The primary structure comprises 274 residues: MGILDFFRKKEKKENLWTKCEECKNILLAQELETNFYVCPKCGHHHQMNPYLWASMLLDYNYNVLFEYILPTDFLSFKDTKRYKDRLKTLKETSNTSEAMTVFDGKLSDYPVVLSVMDFSFIGGSMGSVVGERFKLASLKAVQDKKPHISVVTSGGARMQESVISLMQMAKTSIAVDIMHKNGIPFITVLTNPTTGGVSASFAFLGDVIIAEPKAIIGFAGARVIEQTIKQQLPEDFQTSEFLLKKGMVDMVVHRHLMKQTLKNLLNLLFYKNA.

The CoA carboxyltransferase N-terminal domain maps to 16 to 274 (LWTKCEECKN…LLNLLFYKNA (259 aa)). Positions 20, 23, 39, and 42 each coordinate Zn(2+). Residues 20–42 (CEECKNILLAQELETNFYVCPKC) form a C4-type zinc finger.

This sequence belongs to the AccD/PCCB family. Acetyl-CoA carboxylase is a heterohexamer composed of biotin carboxyl carrier protein (AccB), biotin carboxylase (AccC) and two subunits each of ACCase subunit alpha (AccA) and ACCase subunit beta (AccD). The cofactor is Zn(2+).

Its subcellular location is the cytoplasm. It carries out the reaction N(6)-carboxybiotinyl-L-lysyl-[protein] + acetyl-CoA = N(6)-biotinyl-L-lysyl-[protein] + malonyl-CoA. The protein operates within lipid metabolism; malonyl-CoA biosynthesis; malonyl-CoA from acetyl-CoA: step 1/1. In terms of biological role, component of the acetyl coenzyme A carboxylase (ACC) complex. Biotin carboxylase (BC) catalyzes the carboxylation of biotin on its carrier protein (BCCP) and then the CO(2) group is transferred by the transcarboxylase to acetyl-CoA to form malonyl-CoA. The protein is Acetyl-coenzyme A carboxylase carboxyl transferase subunit beta of Hydrogenobaculum sp. (strain Y04AAS1).